The chain runs to 412 residues: Serine hydroxymethyltransferase (412 aa).

(6S)-5,6,7,8-tetrahydrofolate is bound by residues Leu-120 and 124-126 (GHL). Residue Lys-229 is modified to N6-(pyridoxal phosphate)lysine. Position 352-354 (352-354 (SPF)) interacts with (6S)-5,6,7,8-tetrahydrofolate.

The protein belongs to the SHMT family. In terms of assembly, homodimer. Pyridoxal 5'-phosphate is required as a cofactor.

It localises to the cytoplasm. The catalysed reaction is (6R)-5,10-methylene-5,6,7,8-tetrahydrofolate + glycine + H2O = (6S)-5,6,7,8-tetrahydrofolate + L-serine. It participates in one-carbon metabolism; tetrahydrofolate interconversion. The protein operates within amino-acid biosynthesis; glycine biosynthesis; glycine from L-serine: step 1/1. Functionally, catalyzes the reversible interconversion of serine and glycine with tetrahydrofolate (THF) serving as the one-carbon carrier. This reaction serves as the major source of one-carbon groups required for the biosynthesis of purines, thymidylate, methionine, and other important biomolecules. Also exhibits THF-independent aldolase activity toward beta-hydroxyamino acids, producing glycine and aldehydes, via a retro-aldol mechanism. The chain is Serine hydroxymethyltransferase from Ruminiclostridium cellulolyticum (strain ATCC 35319 / DSM 5812 / JCM 6584 / H10) (Clostridium cellulolyticum).